The following is a 716-amino-acid chain: Fatty acid oxidation complex subunit alpha (716 aa).

Residues Met1 to Ala189 are enoyl-CoA hydratase/isomerase. Residue Asp296 participates in substrate binding. Positions Lys311–Ala716 are 3-hydroxyacyl-CoA dehydrogenase. NAD(+) contacts are provided by residues Met324, Asp343, Val400–Glu402, Lys407, and Ser429. His450 functions as the For 3-hydroxyacyl-CoA dehydrogenase activity in the catalytic mechanism. Position 453 (Asn453) interacts with NAD(+). Asn500 and Tyr660 together coordinate substrate.

In the N-terminal section; belongs to the enoyl-CoA hydratase/isomerase family. This sequence in the C-terminal section; belongs to the 3-hydroxyacyl-CoA dehydrogenase family. As to quaternary structure, heterotetramer of two alpha chains (FadB) and two beta chains (FadA).

It carries out the reaction a (3S)-3-hydroxyacyl-CoA + NAD(+) = a 3-oxoacyl-CoA + NADH + H(+). The catalysed reaction is a (3S)-3-hydroxyacyl-CoA = a (2E)-enoyl-CoA + H2O. The enzyme catalyses a 4-saturated-(3S)-3-hydroxyacyl-CoA = a (3E)-enoyl-CoA + H2O. It catalyses the reaction (3S)-3-hydroxybutanoyl-CoA = (3R)-3-hydroxybutanoyl-CoA. It carries out the reaction a (3Z)-enoyl-CoA = a 4-saturated (2E)-enoyl-CoA. The catalysed reaction is a (3E)-enoyl-CoA = a 4-saturated (2E)-enoyl-CoA. It functions in the pathway lipid metabolism; fatty acid beta-oxidation. Functionally, involved in the aerobic and anaerobic degradation of long-chain fatty acids via beta-oxidation cycle. Catalyzes the formation of 3-oxoacyl-CoA from enoyl-CoA via L-3-hydroxyacyl-CoA. It can also use D-3-hydroxyacyl-CoA and cis-3-enoyl-CoA as substrate. In Shewanella frigidimarina (strain NCIMB 400), this protein is Fatty acid oxidation complex subunit alpha.